The following is a 198-amino-acid chain: ATP synthase subunit delta (198 aa).

Belongs to the ATPase delta chain family. In terms of assembly, F-type ATPases have 2 components, F(1) - the catalytic core - and F(0) - the membrane proton channel. F(1) has five subunits: alpha(3), beta(3), gamma(1), delta(1), epsilon(1). F(0) has three main subunits: a(1), b(2) and c(10-14). The alpha and beta chains form an alternating ring which encloses part of the gamma chain. F(1) is attached to F(0) by a central stalk formed by the gamma and epsilon chains, while a peripheral stalk is formed by the delta and b chains.

It is found in the cell inner membrane. Functionally, f(1)F(0) ATP synthase produces ATP from ADP in the presence of a proton or sodium gradient. F-type ATPases consist of two structural domains, F(1) containing the extramembraneous catalytic core and F(0) containing the membrane proton channel, linked together by a central stalk and a peripheral stalk. During catalysis, ATP synthesis in the catalytic domain of F(1) is coupled via a rotary mechanism of the central stalk subunits to proton translocation. In terms of biological role, this protein is part of the stalk that links CF(0) to CF(1). It either transmits conformational changes from CF(0) to CF(1) or is implicated in proton conduction. The polypeptide is ATP synthase subunit delta (Gluconacetobacter diazotrophicus (strain ATCC 49037 / DSM 5601 / CCUG 37298 / CIP 103539 / LMG 7603 / PAl5)).